A 213-amino-acid polypeptide reads, in one-letter code: Protein MobE (213 aa).

The polypeptide is Protein MobE (mobE) (Acidithiobacillus ferrooxidans (Thiobacillus ferrooxidans)).